Here is a 148-residue protein sequence, read N- to C-terminus: MNFSVVAVALVVVLTVHFTDGQETSSSLPSPPSPLPGRWPWGPKPWHCRPHHHGFTMIYGCEKFSRDMKKEMDALRNNGSESCRTLSTWVEQENCKFEQLMDARSRVVPEEKCLQNMVAFATGITPSTTVTTPTPTTETPTTETPSTP.

The signal sequence occupies residues 1–21; the sequence is MNFSVVAVALVVVLTVHFTDG. The propeptide occupies 22–38; sequence QETSSSLPSPPSPLPGR. A disordered region spans residues 125-148; it reads TPSTTVTTPTPTTETPTTETPSTP.

In terms of processing, contains 2 disulfide bonds. As to expression, expressed by the venom gland.

It is found in the secreted. Its function is as follows. Probable ion channel inhibitor. The sequence is that of U5-hexatoxin-Hi1a from Hadronyche infensa (Fraser island funnel-web spider).